The sequence spans 398 residues: 4-hydroxy-3-methylbut-2-en-1-yl diphosphate synthase (ferredoxin) (398 aa).

Residues C306, C309, C340, and E347 each contribute to the [4Fe-4S] cluster site.

Belongs to the IspG family. Requires [4Fe-4S] cluster as cofactor.

It carries out the reaction (2E)-4-hydroxy-3-methylbut-2-enyl diphosphate + 2 oxidized [2Fe-2S]-[ferredoxin] + H2O = 2-C-methyl-D-erythritol 2,4-cyclic diphosphate + 2 reduced [2Fe-2S]-[ferredoxin] + H(+). It functions in the pathway isoprenoid biosynthesis; isopentenyl diphosphate biosynthesis via DXP pathway; isopentenyl diphosphate from 1-deoxy-D-xylulose 5-phosphate: step 5/6. Functionally, converts 2C-methyl-D-erythritol 2,4-cyclodiphosphate (ME-2,4cPP) into 1-hydroxy-2-methyl-2-(E)-butenyl 4-diphosphate. The sequence is that of 4-hydroxy-3-methylbut-2-en-1-yl diphosphate synthase (ferredoxin) from Parasynechococcus marenigrum (strain WH8102).